The primary structure comprises 456 residues: Adenylosuccinate lyase (456 aa).

Residues arginine 15–tyrosine 16, asparagine 90–aspartate 92, and threonine 122–serine 123 each bind N(6)-(1,2-dicarboxyethyl)-AMP. The active-site Proton donor/acceptor is the histidine 171. N(6)-(1,2-dicarboxyethyl)-AMP is bound at residue glutamine 248. The active-site Proton donor/acceptor is serine 296. N(6)-(1,2-dicarboxyethyl)-AMP-binding positions include serine 297, lysine 302–asparagine 304, asparagine 310, arginine 336, and serine 341–arginine 345.

This sequence belongs to the lyase 1 family. Adenylosuccinate lyase subfamily. Homotetramer. Residues from neighboring subunits contribute catalytic and substrate-binding residues to each active site.

The catalysed reaction is N(6)-(1,2-dicarboxyethyl)-AMP = fumarate + AMP. It carries out the reaction (2S)-2-[5-amino-1-(5-phospho-beta-D-ribosyl)imidazole-4-carboxamido]succinate = 5-amino-1-(5-phospho-beta-D-ribosyl)imidazole-4-carboxamide + fumarate. The protein operates within purine metabolism; AMP biosynthesis via de novo pathway; AMP from IMP: step 2/2. It participates in purine metabolism; IMP biosynthesis via de novo pathway; 5-amino-1-(5-phospho-D-ribosyl)imidazole-4-carboxamide from 5-amino-1-(5-phospho-D-ribosyl)imidazole-4-carboxylate: step 2/2. In terms of biological role, catalyzes two reactions in de novo purine nucleotide biosynthesis. Catalyzes the breakdown of 5-aminoimidazole- (N-succinylocarboxamide) ribotide (SAICAR or 2-[5-amino-1-(5-phospho-beta-D-ribosyl)imidazole-4-carboxamido]succinate) to 5-aminoimidazole-4-carboxamide ribotide (AICAR or 5-amino-1-(5-phospho-beta-D-ribosyl)imidazole-4-carboxamide) and fumarate, and of adenylosuccinate (ADS or N(6)-(1,2-dicarboxyethyl)-AMP) to adenosine monophosphate (AMP) and fumarate. This Pseudomonas aeruginosa (strain ATCC 15692 / DSM 22644 / CIP 104116 / JCM 14847 / LMG 12228 / 1C / PRS 101 / PAO1) protein is Adenylosuccinate lyase (purB).